The sequence spans 469 residues: Serine hydroxymethyltransferase, cytosolic (469 aa).

An N6-(pyridoxal phosphate)lysine modification is found at lysine 248.

The protein belongs to the SHMT family. In terms of assembly, homotetramer. Pyridoxal 5'-phosphate is required as a cofactor.

It is found in the cytoplasm. It catalyses the reaction (6R)-5,10-methylene-5,6,7,8-tetrahydrofolate + glycine + H2O = (6S)-5,6,7,8-tetrahydrofolate + L-serine. The protein operates within one-carbon metabolism; tetrahydrofolate interconversion. Its function is as follows. Interconversion of serine and glycine. This Eremothecium gossypii (strain ATCC 10895 / CBS 109.51 / FGSC 9923 / NRRL Y-1056) (Yeast) protein is Serine hydroxymethyltransferase, cytosolic (SHM2).